The following is a 263-amino-acid chain: Izumo sperm-egg fusion protein 3 (263 aa).

The first 22 residues, M1–G22, serve as a signal peptide directing secretion. The Extracellular portion of the chain corresponds to C23 to E176. Residues N98 and N128 are each glycosylated (N-linked (GlcNAc...) asparagine). Residues I177–F197 traverse the membrane as a helical segment. Over H198 to T263 the chain is Cytoplasmic. A disordered region spans residues G241–T263.

Belongs to the Izumo family. Monomer and homodimer. As to expression, sperm-specific (at protein level).

The protein resides in the cell membrane. Its subcellular location is the cytoplasmic vesicle. It localises to the secretory vesicle. The protein localises to the acrosome inner membrane. Plays an important role in the biogenesis of the acrosome during sperm development. The sequence is that of Izumo sperm-egg fusion protein 3 (Izumo3) from Mus musculus (Mouse).